We begin with the raw amino-acid sequence, 193 residues long: Putative manganese efflux pump MntP (193 aa).

6 consecutive transmembrane segments (helical) span residues 8-28 (LLAI…GIIL), 37-57 (LVMA…GWMF), 61-81 (FSHL…AFLG), 109-129 (MAIA…LLGI), 138-158 (PILI…YFGI), and 172-192 (LWGG…HLFL).

This sequence belongs to the MntP (TC 9.B.29) family.

It localises to the cell inner membrane. Probably functions as a manganese efflux pump. The sequence is that of Putative manganese efflux pump MntP from Bacteroides thetaiotaomicron (strain ATCC 29148 / DSM 2079 / JCM 5827 / CCUG 10774 / NCTC 10582 / VPI-5482 / E50).